The primary structure comprises 463 residues: Glutamate--tRNA ligase 2 (463 aa).

The 'HIGH' region motif lies at 11 to 21 (PSPTGYLHIGG). Positions 240–244 (KLSKR) match the 'KMSKS' region motif. K243 lines the ATP pocket.

This sequence belongs to the class-I aminoacyl-tRNA synthetase family. Glutamate--tRNA ligase type 1 subfamily. As to quaternary structure, monomer.

Its subcellular location is the cytoplasm. It carries out the reaction tRNA(Glu) + L-glutamate + ATP = L-glutamyl-tRNA(Glu) + AMP + diphosphate. Functionally, catalyzes the attachment of glutamate to tRNA(Glu) in a two-step reaction: glutamate is first activated by ATP to form Glu-AMP and then transferred to the acceptor end of tRNA(Glu). This chain is Glutamate--tRNA ligase 2, found in Campylobacter jejuni subsp. jejuni serotype O:6 (strain 81116 / NCTC 11828).